We begin with the raw amino-acid sequence, 356 residues long: Trans-enoyl reductase pgmF (356 aa).

NADP(+) contacts are provided by residues 57–60 (VDFK), 175–178 (SGGC), 198–201 (STPN), Tyr-216, 261–262 (VG), and 342–343 (AK).

This sequence belongs to the zinc-containing alcohol dehydrogenase family.

Its function is as follows. FAD-linked oxidoreductase; part of the gene cluster that mediates the biosynthesis of pleosporalin A, ascomycone A, as well as a third cryptic naphthoquinone derived pigment, all responsible for the coloration of conidia. The pathway begins with the biosynthesis of the cyclized heptaketide 3-acetonyl-1,6,8-trihydroxy-2-naphthaldehyde by the NR-PKS pgmA. The C-6 hydroxyl group is further methylated by the O-methyltransferase pgmB to yield fusarubinaldehyde which is in turn oxidized by the cytochrome P450 monooxygenase pgmC at C-9. The C-1 hydroxyl group is then methylated spontaneously. Although pgmE, pgmD and pgmH are essential for the production of pleosporalin A, it is not the case for the 2 other final products and it remains difficult to assign a specific function to each enzyme. PgmF and pgmG seem not to be involved in pigment biosynthesis although they were regulated by the cluster-specific transcription factor pgmR. The chain is Trans-enoyl reductase pgmF from Aspergillus terreus.